Reading from the N-terminus, the 134-residue chain is Cytochrome b5 (134 aa).

The residue at position 2 (Ala-2) is an N-acetylalanine. Residues Lys-7, Lys-10, and Lys-19 each carry the N6-acetyllysine modification. The Cytochrome b5 heme-binding domain maps to 9–85; sequence VKYYTLEEIQ…SKTYIIGELH (77 aa). Heme-binding residues include His-44 and His-68. A helical membrane pass occupies residues 109-131; it reads WWTNWVIPAISALAVALMYRLYM.

It belongs to the cytochrome b5 family.

It localises to the endoplasmic reticulum membrane. It is found in the microsome membrane. Functionally, cytochrome b5 is a membrane-bound hemoprotein functioning as an electron carrier for several membrane-bound oxygenases. It is also involved in several steps of the sterol biosynthesis pathway, particularly in the C-5 double bond introduction during the C-5 desaturation. This Mus musculus (Mouse) protein is Cytochrome b5 (Cyb5a).